We begin with the raw amino-acid sequence, 1329 residues long: BRCT domain-containing protein At4g02110 (1329 aa).

2 BRCT domains span residues 7 to 97 and 104 to 194; these read LPPK…SILY and NGIP…DYEI. Disordered regions lie at residues 295–378, 393–470, 576–645, 745–827, and 952–1077; these read ANKT…SMER, GEEF…TSEL, EVPE…SPTD, NDVP…ADGK, and AKKE…KESK. 2 stretches are compositionally biased toward polar residues: residues 323–335 and 363–378; these read SLAT…LQRS and SAFN…SMER. Composition is skewed to basic and acidic residues over residues 410–422 and 600–611; these read VSRK…HHNS and RMKDKQETELTT. Residues 793–802 are compositionally biased toward basic residues; the sequence is GKSRVKKTKI. Basic and acidic residues-rich tracts occupy residues 818-827 and 971-983; these read DGGDNSADGK and DDNK…EGIV. Positions 986 to 1004 are enriched in low complexity; sequence SSLQSGKKGSSSRVEVGKS. Residues 1024–1047 are compositionally biased toward basic and acidic residues; the sequence is VMKDVGDNSAKEKENIAVDNESRK. The BRCT 3 domain maps to 1090 to 1181; that stretch reads FQDQEHEPKF…KLLQEEPYEW (92 aa).

The protein is BRCT domain-containing protein At4g02110 of Arabidopsis thaliana (Mouse-ear cress).